The sequence spans 516 residues: HMG box-containing protein 1 (516 aa).

The disordered stretch occupies residues 150–182; that stretch reads ARPPPVSSSSKSGPAFPHDHWKEETPVRHERAN. Positions 156–165 are enriched in low complexity; the sequence is SSSSKSGPAF. The span at 166–182 shows a compositional bias: basic and acidic residues; sequence PHDHWKEETPVRHERAN. The region spanning 203–345 is the AXH domain; it reads WCNSWPSTIW…PPGHPDAINF (143 aa). A DNA-binding region (HMG box) is located at residues 436 to 504; that stretch reads CKRPMNAFML…EQKRLNPDCW (69 aa).

Binds TCF4. Binds RB1. Binds the second PAH repeat of SIN3A. Post-translationally, ubiquitinated by the CTLH E3 ubiquitin-protein ligase complex, leading to subsequent proteasomal degradation.

It localises to the nucleus. Its function is as follows. Transcriptional repressor that binds to the promoter region of target genes. Plays a role in the regulation of the cell cycle and of the Wnt pathway. Binds preferentially to the sequence 5'-TTCATTCATTCA-3'. Binding to the histone H1.0 promoter is enhanced by interaction with RB1. Disrupts the interaction between DNA and TCF4. This Mus musculus (Mouse) protein is HMG box-containing protein 1 (Hbp1).